A 209-amino-acid chain; its full sequence is Dual specificity protein phosphatase 22 (209 aa).

The Tyrosine-protein phosphatase domain occupies glycine 4–histidine 144. Cysteine 88 acts as the Phosphocysteine intermediate in catalysis. Positions leucine 169–serine 192 are disordered. A compositionally biased stretch (polar residues) spans alanine 177–tryptophan 190.

The protein belongs to the protein-tyrosine phosphatase family. Non-receptor class dual specificity subfamily.

The protein resides in the cytoplasm. It localises to the nucleus. It catalyses the reaction O-phospho-L-tyrosyl-[protein] + H2O = L-tyrosyl-[protein] + phosphate. The enzyme catalyses O-phospho-L-seryl-[protein] + H2O = L-seryl-[protein] + phosphate. It carries out the reaction O-phospho-L-threonyl-[protein] + H2O = L-threonyl-[protein] + phosphate. Functionally, activates the Jnk signaling pathway. Dephosphorylates and deactivates p38 and stress-activated protein kinase/c-Jun N-terminal kinase (SAPK/JNK). The sequence is that of Dual specificity protein phosphatase 22 (dusp22) from Xenopus laevis (African clawed frog).